Reading from the N-terminus, the 103-residue chain is Ribonuclease VapC14 (103 aa).

A PINc domain is found at 3 to 74 (YVLDTNVVSA…WFDDKVLRIF (72 aa)). Aspartate 6 contacts Mg(2+).

This sequence belongs to the PINc/VapC protein family. The cofactor is Mg(2+).

In terms of biological role, toxic component of a type II toxin-antitoxin (TA) system. An RNase. The cognate antitoxin is VapB14. The protein is Ribonuclease VapC14 (vapC14) of Mycobacterium tuberculosis (strain CDC 1551 / Oshkosh).